The sequence spans 325 residues: Beta-ketoacyl-[acyl-carrier-protein] synthase III (325 aa).

Residues cysteine 119 and histidine 252 contribute to the active site. Residues 253–257 (QANIR) form an ACP-binding region. Residue asparagine 282 is part of the active site.

The protein belongs to the thiolase-like superfamily. FabH family. As to quaternary structure, homodimer.

The protein resides in the cytoplasm. It catalyses the reaction malonyl-[ACP] + acetyl-CoA + H(+) = 3-oxobutanoyl-[ACP] + CO2 + CoA. Its pathway is lipid metabolism; fatty acid biosynthesis. In terms of biological role, catalyzes the condensation reaction of fatty acid synthesis by the addition to an acyl acceptor of two carbons from malonyl-ACP. Catalyzes the first condensation reaction which initiates fatty acid synthesis and may therefore play a role in governing the total rate of fatty acid production. Possesses both acetoacetyl-ACP synthase and acetyl transacylase activities. Its substrate specificity determines the biosynthesis of branched-chain and/or straight-chain of fatty acids. The protein is Beta-ketoacyl-[acyl-carrier-protein] synthase III of Polaromonas sp. (strain JS666 / ATCC BAA-500).